Reading from the N-terminus, the 378-residue chain is Ferredoxin--NADP reductase, root isozyme 1, chloroplastic (378 aa).

The N-terminal 65 residues, 1 to 65, are a transit peptide targeting the chloroplast; sequence MALSTTPSQM…KRSTICMSLQ (65 aa). Positions 93–221 constitute an FAD-binding FR-type domain; sequence KEPYTATIVS…TGPSGKVMLL (129 aa). A disulfide bond links Cys196 and Cys201. Position 197 is a phosphoserine (Ser197). At Thr229 the chain carries Phosphothreonine. 231–249 contributes to the NADP(+) binding site; it reads IMIATGTGVAPYRGYLRRM. Positions 349–373 form a coiled coil; the sequence is LKRVAEERGESWEQKLTQLRKNKQW.

The protein belongs to the ferredoxin--NADP reductase type 1 family. FAD is required as a cofactor. As to expression, expressed in shoots and roots. Less abundant in roots than RFNR2.

It localises to the plastid. The protein resides in the chloroplast. The enzyme catalyses 2 reduced [2Fe-2S]-[ferredoxin] + NADP(+) + H(+) = 2 oxidized [2Fe-2S]-[ferredoxin] + NADPH. Its function is as follows. Maintains the supply of reduced ferredoxin under non-photosynthetic conditions. The sequence is that of Ferredoxin--NADP reductase, root isozyme 1, chloroplastic (RFNR1) from Arabidopsis thaliana (Mouse-ear cress).